The following is a 47-amino-acid chain: Protein PsbN (47 aa).

A helical transmembrane segment spans residues 9-31 (YSLLIAMVTITFGLTGYGLYTAF).

This sequence belongs to the PsbN family.

It is found in the cellular thylakoid membrane. Functionally, may play a role in photosystem I and II biogenesis. In Prochlorococcus marinus (strain MIT 9303), this protein is Protein PsbN.